We begin with the raw amino-acid sequence, 56 residues long: Small ribosomal subunit protein bS21 (56 aa).

The protein belongs to the bacterial ribosomal protein bS21 family.

The sequence is that of Small ribosomal subunit protein bS21 from Synechococcus sp. (strain RCC307).